We begin with the raw amino-acid sequence, 950 residues long: MMKDYYTWTYPDIPENVSQELRQLKSSLVVVGIVGRSKCDQANKMQAFGMEPPIEHKAKEGQVQCYYKLGTSSLLLHFETTYDEAILGQMIDVCMEDVETPFDFDSFYERMRCRFVRMMLLALHACHIVVYVETGQTFDPTLVTVFQLLKFAREQHLMQFLPQMLRETPSARMSERARLCAPRILFLFENFPRDEPKTRECVSAYEFQTEDCIYELLRHHNIVTNSSSSSLVALPNNKQFVFFNAHEQLHEDKLLKAIDCLNQAMYKPDAKEEEEDLEILELAPFEGFVKPYNLPVDDKELEKQQYKQDHTVWHFLQRHVQDALLGCFDEGSFKQHSQQGQFQLLNIHEWHNYMATLHKLLVENAKDPNQETSNEDYKLFLKSFDESLNYEKKFWAHLCELGLKKGIAAYKNAAPANYGNSTHRQLLADATVAFEEEGRGPQAKAALAKMAAICQKHWQDGRQQCEQLSLRSHPCTLPKNLPHEKHNSGVIHISSCNCGRTQGRREDPFNLRQANYEFYEHIAQMCNLCVKVKQYQLPIFEPSVSDYRAAAFEAAFPLLHTGKSGAPQDEDGEEDAEDEEGQEQQQPAEEQRQNTASNGCSQPLSPTFGSDLNMSIAGFGASLNESQASSEQLSNSEQNSTSSGTSSADTENELVVELQELHAKKEARDDAGPADAFSTSTTEYLPGLVHTVSNFGLLPLFPSWSLACVGPSSIYSHNTGLQEHFQSGFLSGANFLLPWDVQLRLVHAPKQQHHTHHQQQHLGKKQQRWKKQGDRLSLKIFVGMEYECSRGHRFMMCAPDRVLRGGADIERETCSKVVHNNMPLYYPCPCRSQTSYLAQLMRIHVVTPKAPVNIIVDPKVCVGKGKYTFTLGSIVPPRLSQSAYWIIRLPYVYQGDDVLIAPPEKLEPDDPLAGGYLLPGMFGVAETDPTLDLNEPGRMGASAAGNFTRI.

Disordered regions lie at residues 560 to 607 and 624 to 651; these read HTGK…LSPT and NESQASSEQLSNSEQNSTSSGTSSADTE. Acidic residues predominate over residues 568–582; sequence QDEDGEEDAEDEEGQ. Residues 593 to 607 show a composition bias toward polar residues; the sequence is QNTASNGCSQPLSPT. Positions 624–648 are enriched in low complexity; that stretch reads NESQASSEQLSNSEQNSTSSGTSSA.

It belongs to the SMG8 family.

In terms of biological role, involved in nonsense-mediated decay (NMD) of mRNAs containing premature stop codons. Probable component of kinase complex containing nonC and recruited to stalled ribosomes. The protein is Nonsense-mediated mRNA decay factor SMG8 of Drosophila yakuba (Fruit fly).